Reading from the N-terminus, the 331-residue chain is Cathepsin S (331 aa).

A signal peptide spans 1–16 (MKRLVCVLLVCSSAVA). Positions 17–114 (QLHKDPTLDH…ITYKSNPNRI (98 aa)) are cleaved as a propeptide — activation peptide. N-linked (GlcNAc...) asparagine glycosylation occurs at Asn104. 4 cysteine pairs are disulfide-bonded: Cys126/Cys224, Cys136/Cys180, Cys170/Cys213, and Cys272/Cys320. The active site involves Cys139. Catalysis depends on residues His278 and Asn298.

It belongs to the peptidase C1 family. In terms of assembly, monomer.

The protein resides in the lysosome. It localises to the secreted. It is found in the cytoplasmic vesicle. Its subcellular location is the phagosome. It catalyses the reaction Similar to cathepsin L, but with much less activity on Z-Phe-Arg-|-NHMec, and more activity on the Z-Val-Val-Arg-|-Xaa compound.. Functionally, thiol protease. Key protease responsible for the removal of the invariant chain from MHC class II molecules and MHC class II antigen presentation. The bond-specificity of this proteinase is in part similar to the specificities of cathepsin L. In Homo sapiens (Human), this protein is Cathepsin S (CTSS).